Here is a 263-residue protein sequence, read N- to C-terminus: Receptor-transporting protein 1 (263 aa).

Topologically, residues 1–238 (MRIFRPWRLR…ETGSGCNFCS (238 aa)) are cytoplasmic. Residues 88 to 197 (ASGRFHCSWC…GEFCEACQEG (110 aa)) form a 3CxxC-type zinc finger. The chain crosses the membrane as a helical span at residues 239–259 (IPWCLFWATVLMLIIYLQFSF). The Extracellular portion of the chain corresponds to 260–263 (RTSV).

The protein belongs to the TMEM7 family. As to quaternary structure, interacts with olfactory receptors. As to expression, predominantly expressed in olfactory and vomeronasal organs, in mature olfactory sensory neurons.

The protein localises to the cell membrane. Its function is as follows. Specifically promotes functional cell surface expression of olfactory receptors, but not of other GPCRs. This is Receptor-transporting protein 1 (Rtp1) from Mus musculus (Mouse).